A 142-amino-acid polypeptide reads, in one-letter code: Large ribosomal subunit protein uL13 (142 aa).

Belongs to the universal ribosomal protein uL13 family. As to quaternary structure, part of the 50S ribosomal subunit.

This protein is one of the early assembly proteins of the 50S ribosomal subunit, although it is not seen to bind rRNA by itself. It is important during the early stages of 50S assembly. This chain is Large ribosomal subunit protein uL13, found in Cellvibrio japonicus (strain Ueda107) (Pseudomonas fluorescens subsp. cellulosa).